The following is a 352-amino-acid chain: Nicotinate-nucleotide--dimethylbenzimidazole phosphoribosyltransferase (352 aa).

E318 serves as the catalytic Proton acceptor.

The protein belongs to the CobT family.

It carries out the reaction 5,6-dimethylbenzimidazole + nicotinate beta-D-ribonucleotide = alpha-ribazole 5'-phosphate + nicotinate + H(+). Its pathway is nucleoside biosynthesis; alpha-ribazole biosynthesis; alpha-ribazole from 5,6-dimethylbenzimidazole: step 1/2. Its function is as follows. Catalyzes the synthesis of alpha-ribazole-5'-phosphate from nicotinate mononucleotide (NAMN) and 5,6-dimethylbenzimidazole (DMB). This Geobacter sulfurreducens (strain ATCC 51573 / DSM 12127 / PCA) protein is Nicotinate-nucleotide--dimethylbenzimidazole phosphoribosyltransferase.